We begin with the raw amino-acid sequence, 574 residues long: MTILLQRAKFKKRLMPILFPLMLAGCTNLFGSNFQDVLRNDANASSEFYMNKIEQTREVEDQQTYKLLAARVLVTENKTAQAEALLAELTKLTPEQQLDKSILDALIAAVKRDNDSASALLKTIPLAQLSQSQTSRYYEVQARIAENKTDIIEAVKARIQMDMALTDVQRKQDNIDKIWALLRSGNKTLINTTQPEGNVALAGWLDLTKAYNDNLSQPSQLAQALQNWKTTYPNHSAAYLFPTELKSLSNFTQTQVNKIALLLPLSGNASILGSTIKSGFDDSRGADKSVQVDVIDTMAMPVTDAIALAKQNGDGMIVGPLLKDNVDVILSNPTAVQGMNVLALNSTPNARAIDKMCYYGLAPEDEAEAAANRMWNDGVRQPIVAVPQSDLGQRTASAFNVRWQQLAASDADVRYYNQPDDAAYNLTADPAQNQAIYIVVTDSEQLMSIKGALDNSGVKAKIYTNSRNNSSNNAVEYRLAMEGVTFSDIPFFKDLDGEQYKKIEAATGGDYSLMRLYAMGADSWLLAHSFNELRQVPGFSLSGLTGKLTAGPNCNVERDLTWYSYQGGNIVPLN.

Residues 1–25 (MTILLQRAKFKKRLMPILFPLMLAG) form the signal peptide. Cys-26 carries the N-palmitoyl cysteine lipid modification. Cys-26 carries the S-diacylglycerol cysteine lipid modification.

The protein belongs to the LpoA family. As to quaternary structure, interacts with PBP1a.

The protein resides in the cell outer membrane. Regulator of peptidoglycan synthesis that is essential for the function of penicillin-binding protein 1A (PBP1a). The polypeptide is Penicillin-binding protein activator LpoA (Mannheimia succiniciproducens (strain KCTC 0769BP / MBEL55E)).